The chain runs to 476 residues: MANSSKERLCGAGAPLGHANGFPPSVYPFAFSGGIRRSPPFEVLANGGFFRSFPTDLPKEMASLSLTMGAAERSAHSDCISTVETQSTSSEEMVPSSPSPPPPPRVYKPCFVCNDKSSGYHYGVSSCEGCKGFFRRSIQKNMVYTCHRDKNCQINKVTRNRCQFCRLQKCFQVGMSKEAVRNDRNKKKKEIKEEVVLPDSYEMPPEMEELIQKVSKAHQETFPSLCQLGKYTTNSSADQRVQLDLGLWDKFSELSTKCIIKIVEFAKRLPGFTTLTIADQITLLKSACLDILMLRICTRYTPEQDTMTFSDGLTLNRTQMHNAGFGPLTDLVFSFADQLLPLEMDDTETGLLSAICLICGDRMDLEEPEKVEKLQEPLLEALKFYARRRRPDKPYMFPRMLMKITDLRGISTKGAERAITLKLEIPGPMPPLIREMLENPEAFEDGAATPKPSERSSSESSNGSPTGEDSSGSKTP.

The modulating stretch occupies residues 1 to 109 (MANSSKERLC…PPPPPRVYKP (109 aa)). Low complexity predominate over residues 81 to 96 (STVETQSTSSEEMVPS). A disordered region spans residues 81–102 (STVETQSTSSEEMVPSSPSPPP). 2 consecutive NR C4-type zinc fingers follow at residues 110–130 (CFVC…CEGC) and 146–170 (CHRD…LQKC). Residues 110-175 (CFVCNDKSSG…RLQKCFQVGM (66 aa)) constitute a DNA-binding region (nuclear receptor). Residues 176-205 (SKEAVRNDRNKKKKEIKEEVVLPDSYEMPP) are hinge. Residues 184 to 189 (RNKKKK) carry the Nuclear localization signal motif. One can recognise an NR LBD domain in the interval 206-440 (EMEELIQKVS…PLIREMLENP (235 aa)). The disordered stretch occupies residues 435–476 (EMLENPEAFEDGAATPKPSERSSSESSNGSPTGEDSSGSKTP). Over residues 462–476 (NGSPTGEDSSGSKTP) the composition is skewed to polar residues.

Belongs to the nuclear hormone receptor family. NR1 subfamily. In terms of assembly, heterodimer; with a rxr molecule. Binds DNA preferentially as a rar/rxr heterodimer. In terms of tissue distribution, expressed in embryos, tadpoles and various adult tissue such as kidney, testis, brain, liver, skeletal muscle and spleen.

The protein resides in the nucleus. In terms of biological role, receptor for retinoic acid. Retinoic acid receptors bind as heterodimers to their target response elements in response to their ligands, all-trans or 9-cis retinoic acid, and regulate gene expression in various biological processes. The rar/rxr heterodimers bind to the retinoic acid response elements (RARE) composed of tandem 5'-AGGTCA-3' sites known as DR1-DR5. This is Retinoic acid receptor gamma (rarg) from Xenopus laevis (African clawed frog).